A 378-amino-acid chain; its full sequence is Cytochrome b (378 aa).

The next 4 membrane-spanning stretches (helical) occupy residues 33–53 (FGSL…FLAM), 77–98 (WMIR…FLHT), 113–133 (WNIG…GYVL), and 178–198 (FFTF…IHLL). Residues H83 and H97 each coordinate heme b. H182 and H196 together coordinate heme b. A ubiquinone is bound at residue H201. 4 helical membrane passes run 226-246 (TKDI…TLFT), 288-308 (LGGV…PATH), 320-340 (ITQI…WIGG), and 347-366 (FEAI…TLIP).

The protein belongs to the cytochrome b family. As to quaternary structure, the cytochrome bc1 complex contains 11 subunits: 3 respiratory subunits (MT-CYB, CYC1 and UQCRFS1), 2 core proteins (UQCRC1 and UQCRC2) and 6 low-molecular weight proteins (UQCRH/QCR6, UQCRB/QCR7, UQCRQ/QCR8, UQCR10/QCR9, UQCR11/QCR10 and a cleavage product of UQCRFS1). This cytochrome bc1 complex then forms a dimer. The cofactor is heme b.

The protein localises to the mitochondrion inner membrane. In terms of biological role, component of the ubiquinol-cytochrome c reductase complex (complex III or cytochrome b-c1 complex) that is part of the mitochondrial respiratory chain. The b-c1 complex mediates electron transfer from ubiquinol to cytochrome c. Contributes to the generation of a proton gradient across the mitochondrial membrane that is then used for ATP synthesis. This chain is Cytochrome b (MT-CYB), found in Cebus albifrons (White-fronted capuchin).